A 72-amino-acid polypeptide reads, in one-letter code: UPF0270 protein YheU (72 aa).

It belongs to the UPF0270 family.

The polypeptide is UPF0270 protein YheU (Escherichia coli (strain ATCC 8739 / DSM 1576 / NBRC 3972 / NCIMB 8545 / WDCM 00012 / Crooks)).